The following is a 1164-amino-acid chain: Avirulence protein AvrBs3 (1164 aa).

2 disordered regions span residues 1–68 and 128–152; these read MDPI…SAGS and ARPPRAKPAPRRRAAQPSDASPAAQ. A compositionally biased stretch (basic residues) spans 131–141; the sequence is PRAKPAPRRRA. The span at 142–151 shows a compositional bias: low complexity; sequence AQPSDASPAA. Residues 225–254 form a Cryptic repeat -1 repeat; the sequence is IVGVGKQWSGARALEALLTVAGELRGPPLQ. The Cryptic repeat 0 repeat unit spans residues 255-288; it reads LDTGQLLKIAKRGGVTAVEAVHAWRNALTGAPLN. Core repeat repeat units lie at residues 289–322, 323–356, 357–390, 391–424, 425–458, 459–492, 493–526, 527–560, 561–594, 595–628, 629–662, 663–696, 697–730, 731–764, 765–798, 799–832, and 833–866; these read LTPEQVVAIASHDGGKQALETVQRLLPVLCQAHG, LTPQQVVAIASNGGGKQALETVQRLLPVLCQAHG, LTPQQVVAIASNSGGKQALETVQRLLPVLCQAHG, LTPEQVVAIASNGGGKQALETVQRLLPVLCQAHG, LTPEQVVAIASNIGGKQALETVQALLPVLCQAHG, LTPEQVVAIASNSGGKQALETVQALLPVLCQAHG, LTPEQVVAIASNSGGKQALETVQRLLPVLCQAHG, and LTPQQVVAIASNGGGRPALETVQRLLPVLCQAHG. The Core repeat 17.5 repeat unit spans residues 867 to 886; the sequence is LTPQQVVAIASNGGGRPALE. The Nuclear localization signal NLS1 motif lies at 1021–1024; that stretch reads KRAK. The span at 1048–1060 shows a compositional bias: basic and acidic residues; it reads DLDAPSPMHEGDQ. The tract at residues 1048–1091 is disordered; it reads DLDAPSPMHEGDQTRASSRKRSRSDRAVTGPSAQQSFEVRVPEQ. The short motif at 1067-1070 is the Nuclear localization signal NLS2 element; sequence KRSR. The Nuclear localization signal NLS3 signature appears at 1104–1107; that stretch reads KRPR. The acidic activation domain AAD stretch occupies residues 1135–1164; the sequence is QDEDPFAGAADDFPAFNEEELAWLMELLPQ.

The protein belongs to the transcription activator-like effector (TALE) family. Forms a homodimer in the plant cell cytoplasm, prior to nuclear import. Interacts with the plant cell importin alpha-1 (Caimp alpha-1) and importin alpha-2 (Caimp alpha-2) via the nuclear localization signal NLS2, but not via NLS3.

Its subcellular location is the secreted. It localises to the host nucleus. Avirulence protein. Acts as a transcription factor in C.annuum plants. In susceptible plants lacking the Bs3 resistance gene induces expression of a number of genes, including genes homologous to a family of auxin-induced genes, alpha-expansin genes, pectate lyase, anthocyanidin glucoside rhamnosyl transferase and at least one transcription factor, UPA20. Their expression leads to plant hypertrophy in mesophyll cells, probably mainly mediated by UPA20. In resistant plants induces the hypersensitive response (HR), by inducing transcription of plant Bs3 which induces HR; a mutated AvrBs3 missing repeats 11-14 does not induce expression of Bs3 but does induce Bs3-E, a Bs3 allele with a modified promoter. Binds DNA corresponding to the upa-box in sequence-specific manner. This Xanthomonas euvesicatoria protein is Avirulence protein AvrBs3 (avrBs3).